The primary structure comprises 601 residues: Glutathione-regulated potassium-efflux system protein KefB (601 aa).

The next 13 membrane-spanning stretches (helical) occupy residues 4-24, 29-49, 55-75, 87-107, 111-131, 152-172, 177-197, 207-227, 230-250, 262-282, 284-304, 324-344, and 356-376; these read ADLL…VPLA, IGAV…GLGF, EILH…GLEL, IFGV…GLLM, FLWQ…TAMA, VLLF…LLAG, HFDW…LIGG, FIAA…LVLS, LFMD…GVLL, AIDP…GMSL, LGVL…LVVI, MQFA…FSTA, and ALLL…MKGI. The RCK N-terminal domain occupies 400-519; that stretch reads KPQVVVVGFG…AGVTQFSRET (120 aa).

This sequence belongs to the monovalent cation:proton antiporter 2 (CPA2) transporter (TC 2.A.37) family. KefB subfamily. Interacts with the regulatory subunit KefG.

It localises to the cell inner membrane. Functionally, pore-forming subunit of a potassium efflux system that confers protection against electrophiles. Catalyzes K(+)/H(+) antiport. In Salmonella typhi, this protein is Glutathione-regulated potassium-efflux system protein KefB.